The sequence spans 860 residues: Late endosome and vacuole interface protein 11 (860 aa).

The tract at residues Glu-19 to Glu-45 is disordered. Over residues Ile-20–Ser-31 the composition is skewed to low complexity. Acidic residues predominate over residues Glu-35–Glu-45. The BED-type zinc finger occupies Lys-84–Asn-138. Zn(2+) contacts are provided by Cys-105, Cys-108, His-126, and His-131.

It belongs to the VID22 family.

Its subcellular location is the nucleus. Functionally, involved in vacuolar processing and morphology. The protein is Late endosome and vacuole interface protein 11 (ENV11) of Saccharomyces cerevisiae (strain ATCC 204508 / S288c) (Baker's yeast).